The following is a 136-amino-acid chain: Large ribosomal subunit protein uL14 (136 aa).

This sequence belongs to the universal ribosomal protein uL14 family.

This is Large ribosomal subunit protein uL14 (rpl23) from Dictyostelium discoideum (Social amoeba).